Reading from the N-terminus, the 151-residue chain is Ribosome maturation factor RimP (151 aa).

Belongs to the RimP family.

Its subcellular location is the cytoplasm. Functionally, required for maturation of 30S ribosomal subunits. The polypeptide is Ribosome maturation factor RimP (Thermoanaerobacter pseudethanolicus (strain ATCC 33223 / 39E) (Clostridium thermohydrosulfuricum)).